A 306-amino-acid polypeptide reads, in one-letter code: Small ribosomal subunit biogenesis GTPase RsgA (306 aa).

Residues 77 to 236 (KNELKRPNVA…IVDTPGFSKL (160 aa)) enclose the CP-type G domain. GTP is bound by residues 126–129 (SKID) and 179–187 (GQTGVGKST). Residues C260, C266, H268, and C274 each contribute to the Zn(2+) site.

The protein belongs to the TRAFAC class YlqF/YawG GTPase family. RsgA subfamily. Monomer. Associates with 30S ribosomal subunit, binds 16S rRNA. The cofactor is Zn(2+).

It localises to the cytoplasm. One of several proteins that assist in the late maturation steps of the functional core of the 30S ribosomal subunit. Helps release RbfA from mature subunits. May play a role in the assembly of ribosomal proteins into the subunit. Circularly permuted GTPase that catalyzes slow GTP hydrolysis, GTPase activity is stimulated by the 30S ribosomal subunit. The chain is Small ribosomal subunit biogenesis GTPase RsgA from Onion yellows phytoplasma (strain OY-M).